The chain runs to 397 residues: ATP phosphoribosyltransferase regulatory subunit (397 aa).

It belongs to the class-II aminoacyl-tRNA synthetase family. HisZ subfamily. As to quaternary structure, heteromultimer composed of HisG and HisZ subunits.

Its subcellular location is the cytoplasm. It participates in amino-acid biosynthesis; L-histidine biosynthesis; L-histidine from 5-phospho-alpha-D-ribose 1-diphosphate: step 1/9. Functionally, required for the first step of histidine biosynthesis. May allow the feedback regulation of ATP phosphoribosyltransferase activity by histidine. The polypeptide is ATP phosphoribosyltransferase regulatory subunit (Nitrosococcus oceani (strain ATCC 19707 / BCRC 17464 / JCM 30415 / NCIMB 11848 / C-107)).